We begin with the raw amino-acid sequence, 410 residues long: TNF receptor-associated factor family protein DDB_G0279745 (410 aa).

The RING-type; degenerate zinc finger occupies 27 to 67; it reads CVICSFPLFDGLQCKRGHGACKSCWEKIIGENGKKECHSCR. TRAF-type zinc fingers lie at residues 81 to 154 and 154 to 213; these read YLEK…SLEQ and QHQN…DESI. Residues 216–284 are a coiled coil; sequence LSNSIVEIQK…SMINKLDDSA (69 aa).

Belongs to the TNF receptor-associated factor family.

The protein localises to the cytoplasm. In terms of biological role, probable adapter protein and signal transducer that links members of the tumor necrosis factor receptor family to different signaling pathways by association with the receptor cytoplasmic domain and kinases. In Dictyostelium discoideum (Social amoeba), this protein is TNF receptor-associated factor family protein DDB_G0279745.